A 744-amino-acid polypeptide reads, in one-letter code: Catalase-peroxidase (744 aa).

A signal peptide spans 1 to 22; sequence MSPRARRCTDRCARMSERSMNA. The segment at residues 114-234 is a cross-link (tryptophyl-tyrosyl-methioninium (Trp-Tyr) (with M-260)); it reads WHSAGTYRLA…LGATEMGLIY (121 aa). H115 functions as the Proton acceptor in the catalytic mechanism. A cross-link (tryptophyl-tyrosyl-methioninium (Tyr-Met) (with W-114)) is located at residues 234–260; it reads YVNPEGPDRNGDPISAAKFIRETFARM. H275 contributes to the heme b binding site.

The protein belongs to the peroxidase family. Peroxidase/catalase subfamily. In terms of assembly, homodimer or homotetramer. Requires heme b as cofactor. Post-translationally, formation of the three residue Trp-Tyr-Met cross-link is important for the catalase, but not the peroxidase activity of the enzyme.

It carries out the reaction H2O2 + AH2 = A + 2 H2O. The catalysed reaction is 2 H2O2 = O2 + 2 H2O. Its function is as follows. Bifunctional enzyme with both catalase and broad-spectrum peroxidase activity. The protein is Catalase-peroxidase of Azorhizobium caulinodans (strain ATCC 43989 / DSM 5975 / JCM 20966 / LMG 6465 / NBRC 14845 / NCIMB 13405 / ORS 571).